A 373-amino-acid chain; its full sequence is 3-dehydroquinate synthase (373 aa).

NAD(+)-binding positions include 67 to 72 (EGEETK), 101 to 105 (GVILD), 125 to 126 (TT), K138, and K147. Residues E180, H240, and H256 each contribute to the Zn(2+) site.

It belongs to the sugar phosphate cyclases superfamily. Dehydroquinate synthase family. It depends on NAD(+) as a cofactor. Co(2+) serves as cofactor. The cofactor is Zn(2+).

It localises to the cytoplasm. It carries out the reaction 7-phospho-2-dehydro-3-deoxy-D-arabino-heptonate = 3-dehydroquinate + phosphate. Its pathway is metabolic intermediate biosynthesis; chorismate biosynthesis; chorismate from D-erythrose 4-phosphate and phosphoenolpyruvate: step 2/7. Its function is as follows. Catalyzes the conversion of 3-deoxy-D-arabino-heptulosonate 7-phosphate (DAHP) to dehydroquinate (DHQ). This chain is 3-dehydroquinate synthase, found in Chlamydia trachomatis serovar A (strain ATCC VR-571B / DSM 19440 / HAR-13).